Here is a 246-residue protein sequence, read N- to C-terminus: UL16-binding protein 2 (246 aa).

The first 25 residues, 1–25 (MAAAAATKILLCLPLLLLLSGWSRA), serve as a signal peptide directing secretion. Positions 29 to 117 (DPHSLCYDIT…IQLENYTPKE (89 aa)) are MHC class I alpha-1 like. Cys50 and Cys66 are joined by a disulfide. 2 N-linked (GlcNAc...) asparagine glycosylation sites follow: Asn68 and Asn82. An MHC class I alpha-2 like region spans residues 118–210 (PLTLQARMSC…MDSTLEPSAG (93 aa)). Cys127 and Cys190 are oxidised to a cystine. Residue Ser216 coordinates a protein. Ser217 carries GPI-anchor amidated serine lipidation. Residues 218-246 (GTTQLRATATTLILCCLLIILPCFILPGI) constitute a propeptide, removed in mature form.

It belongs to the MHC class I family. As to quaternary structure, interacts with KLRK1/NKG2D. Does not bind to beta2-microglobulin. In terms of assembly, (Microbial infection) In CMV-infected cells, interacts with the viral glycoprotein UL16; this interaction causes ULBP2 retention in the endoplasmic reticulum and cis-Golgi and prevents binding to and activation of KLRK1/NKG2D, providing CMV with an immune evasion mechanism. In terms of tissue distribution, expressed in various types of cancer cell lines and in the fetus, but not in normal tissues.

It localises to the cell membrane. Its subcellular location is the endoplasmic reticulum. It is found in the secreted. In terms of biological role, binds and activates the KLRK1/NKG2D receptor, mediating natural killer cell cytotoxicity. This is UL16-binding protein 2 from Homo sapiens (Human).